We begin with the raw amino-acid sequence, 295 residues long: Probable protein phosphatase 2C 5 (295 aa).

A PPM-type phosphatase domain is found at Gln-23–Phe-294. Residues Asp-57 and Gly-58 each contribute to the Mn(2+) site. The disordered stretch occupies residues Asn-151 to Glu-170. Residues Asp-237 and Asp-285 each coordinate Mn(2+).

This sequence belongs to the PP2C family. The cofactor is Mg(2+). Requires Mn(2+) as cofactor.

It localises to the membrane. It carries out the reaction O-phospho-L-seryl-[protein] + H2O = L-seryl-[protein] + phosphate. It catalyses the reaction O-phospho-L-threonyl-[protein] + H2O = L-threonyl-[protein] + phosphate. Enzyme with a broad specificity. This chain is Probable protein phosphatase 2C 5, found in Paramecium tetraurelia.